Consider the following 528-residue polypeptide: Glutamyl-tRNA(Gln) amidotransferase subunit A, mitochondrial (528 aa).

Catalysis depends on K76, which acts as the Charge relay system. Residues 148 to 167 (YREKRKQNPHSENEDSDWLI) are disordered. The Charge relay system role is filled by S171. S195 acts as the Acyl-ester intermediate in catalysis.

The protein belongs to the amidase family. GatA subfamily. Subunit of the heterotrimeric GatCAB amidotransferase (AdT) complex, composed of A (QRSL1), B (GATB) and C (GATC) subunits.

The protein resides in the mitochondrion. The enzyme catalyses L-glutamyl-tRNA(Gln) + L-glutamine + ATP + H2O = L-glutaminyl-tRNA(Gln) + L-glutamate + ADP + phosphate + H(+). Its function is as follows. Allows the formation of correctly charged Gln-tRNA(Gln) through the transamidation of misacylated Glu-tRNA(Gln) in the mitochondria. The reaction takes place in the presence of glutamine and ATP through an activated gamma-phospho-Glu-tRNA(Gln). The polypeptide is Glutamyl-tRNA(Gln) amidotransferase subunit A, mitochondrial (Homo sapiens (Human)).